A 937-amino-acid polypeptide reads, in one-letter code: Outer membrane usher protein CS3-2 (937 aa).

This sequence belongs to the fimbrial export usher family. A 97 kDa form of the protein is thought to be due to post-translational processing of isoform 104 kDa.

The protein localises to the cell outer membrane. In terms of biological role, these proteins are essential for the biogenesis of mature CS3 pili, but not for synthesis of the CS3 pilin subunit. In Escherichia coli, this protein is Outer membrane usher protein CS3-2.